The chain runs to 235 residues: Probable septum site-determining protein MinC (235 aa).

The disordered stretch occupies residues 104–125 (KAVRPAPVEPATPSEPPQNANP). Pro residues predominate over residues 110–119 (PVEPATPSEP).

It belongs to the MinC family. In terms of assembly, interacts with MinD and FtsZ.

Its function is as follows. Cell division inhibitor that blocks the formation of polar Z ring septums. Rapidly oscillates between the poles of the cell to destabilize FtsZ filaments that have formed before they mature into polar Z rings. Prevents FtsZ polymerization. The protein is Probable septum site-determining protein MinC of Salmonella agona (strain SL483).